Here is a 353-residue protein sequence, read N- to C-terminus: Chorismate synthase (353 aa).

Arg48 contacts NADP(+). Residues 125-127 (RSS), 238-239 (NA), Gly278, 293-297 (KPTSS), and Arg319 contribute to the FMN site.

This sequence belongs to the chorismate synthase family. In terms of assembly, homotetramer. It depends on FMNH2 as a cofactor.

The enzyme catalyses 5-O-(1-carboxyvinyl)-3-phosphoshikimate = chorismate + phosphate. The protein operates within metabolic intermediate biosynthesis; chorismate biosynthesis; chorismate from D-erythrose 4-phosphate and phosphoenolpyruvate: step 7/7. Its function is as follows. Catalyzes the anti-1,4-elimination of the C-3 phosphate and the C-6 proR hydrogen from 5-enolpyruvylshikimate-3-phosphate (EPSP) to yield chorismate, which is the branch point compound that serves as the starting substrate for the three terminal pathways of aromatic amino acid biosynthesis. This reaction introduces a second double bond into the aromatic ring system. The polypeptide is Chorismate synthase (Buchnera aphidicola subsp. Cinara cedri (strain Cc)).